Here is a 1172-residue protein sequence, read N- to C-terminus: Pesticidal crystal protein Cry1Ha (1172 aa).

This sequence belongs to the delta endotoxin family.

Promotes colloidosmotic lysis by binding to the midgut epithelial cells of insects. This Bacillus thuringiensis protein is Pesticidal crystal protein Cry1Ha (cry1Ha).